Consider the following 432-residue polypeptide: Adenylosuccinate synthetase (432 aa).

GTP-binding positions include 13 to 19 (GDEGKGK) and 41 to 43 (GHT). D14 functions as the Proton acceptor in the catalytic mechanism. Mg(2+)-binding residues include D14 and G41. IMP contacts are provided by residues 14–17 (DEGK), 39–42 (NAGH), T130, R144, Q225, T240, and R304. H42 acts as the Proton donor in catalysis. 300–306 (AVTGRPR) contacts substrate. GTP contacts are provided by residues R306, 332 to 334 (KLD), and 415 to 417 (STG).

The protein belongs to the adenylosuccinate synthetase family. Homodimer. Requires Mg(2+) as cofactor.

The protein resides in the cytoplasm. It carries out the reaction IMP + L-aspartate + GTP = N(6)-(1,2-dicarboxyethyl)-AMP + GDP + phosphate + 2 H(+). The protein operates within purine metabolism; AMP biosynthesis via de novo pathway; AMP from IMP: step 1/2. Plays an important role in the de novo pathway of purine nucleotide biosynthesis. Catalyzes the first committed step in the biosynthesis of AMP from IMP. This Pasteurella multocida (strain Pm70) protein is Adenylosuccinate synthetase.